The following is a 278-amino-acid chain: Troponin T, slow skeletal muscle (278 aa).

Residues 1 to 37 (MSDTEEQEYEEEQPEEEAAEEEEEAPEEPEPVAEPEE) show a composition bias toward acidic residues. 2 disordered regions span residues 1 to 63 (MSDT…RVDF) and 105 to 153 (RRRS…KKKV). A Phosphoserine; by CK2 modification is found at Ser-2. Positions 43–55 (SRPVVPPLIPPKI) are enriched in pro residues. The segment covering 105–149 (RRRSERAEQQRFRTEKERERQAKLAEEKMRKEEEEAKKRAEDDAK) has biased composition (basic and acidic residues).

Belongs to the troponin T family. Interacts with TPM3.

Troponin T is the tropomyosin-binding subunit of troponin, the thin filament regulatory complex which confers calcium-sensitivity to striated muscle actomyosin ATPase activity. The sequence is that of Troponin T, slow skeletal muscle (TNNT1) from Homo sapiens (Human).